A 286-amino-acid polypeptide reads, in one-letter code: Protease HtpX homolog (286 aa).

A run of 2 helical transmembrane segments spans residues 7-27 (TFMLMAAITALFIVIGGMIGG) and 29-49 (SGMMLALLFALGMNFFSYWFS). His-131 serves as a coordination point for Zn(2+). Glu-132 is an active-site residue. Zn(2+) is bound at residue His-135. 2 helical membrane passes run 146–166 (LSATMAGAISALANFAVFFGG) and 177–197 (IAGIAVAILAPLAASLIQMAI). Residue Glu-202 participates in Zn(2+) binding.

This sequence belongs to the peptidase M48B family. The cofactor is Zn(2+).

The protein localises to the cell inner membrane. The protein is Protease HtpX homolog of Ralstonia nicotianae (strain ATCC BAA-1114 / GMI1000) (Ralstonia solanacearum).